The primary structure comprises 160 residues: Cytochrome b6-f complex subunit 4 (160 aa).

3 consecutive transmembrane segments (helical) span residues 36–56 (LLYVFPVVILGTIGLLVGLAV), 95–115 (LLGIACQGAIPLGLLLVPFIE), and 131–151 (AVFLFGTVVTIWLGAGATFPI).

This sequence belongs to the cytochrome b family. PetD subfamily. As to quaternary structure, the 4 large subunits of the cytochrome b6-f complex are cytochrome b6, subunit IV (17 kDa polypeptide, PetD), cytochrome f and the Rieske protein, while the 4 small subunits are PetG, PetL, PetM and PetN. The complex functions as a dimer.

It localises to the cellular thylakoid membrane. In terms of biological role, component of the cytochrome b6-f complex, which mediates electron transfer between photosystem II (PSII) and photosystem I (PSI), cyclic electron flow around PSI, and state transitions. The sequence is that of Cytochrome b6-f complex subunit 4 from Crocosphaera subtropica (strain ATCC 51142 / BH68) (Cyanothece sp. (strain ATCC 51142)).